Reading from the N-terminus, the 223-residue chain is UPF0441 protein YgiB (223 aa).

The segment covering T178–T195 has biased composition (low complexity). Residues T178–G223 are disordered. Over residues A204–G223 the composition is skewed to polar residues.

Belongs to the UPF0441 family.

The chain is UPF0441 protein YgiB from Escherichia coli O6:K15:H31 (strain 536 / UPEC).